We begin with the raw amino-acid sequence, 131 residues long: Protein Bouncer (131 aa).

The first 26 residues, 1 to 26 (MGSLRTRQLFHAALLWLCLPLPLLLC), serve as a signal peptide directing secretion. 4 disulfide bridges follow: C31/C56, C50/C74, C80/C99, and C100/C105. Positions 31-106 (CYYSPVLEKE…YSCCDWPYCN (76 aa)) constitute a UPAR/Ly6 domain. The N-linked (GlcNAc...) asparagine glycan is linked to N65. Residue N106 is the site of GPI-anchor amidated asparagine attachment. Positions 107–131 (RAVALEPLTAMLVAAAVVACSFCLT) are cleaved as a propeptide — removed in mature form.

This sequence belongs to the SPACA4/bouncer family. Interacts with spermatocyte complex composed of izumo1, spaca6 and tmem81. Expressed in oocytes. Not expressed in testis.

Its subcellular location is the cell membrane. Oocyte-expressed fertilization factor that mediates sperm-egg binding and is essential for sperm entry into the egg. Necessary and sufficient to mediate species-specific gamete recognition and fertilization, which is essential for vertebrate species performing external fertilization. External fertilization cannot guarantee that only conspecific sperm reaches the egg by precopulatory mate choice: proteins such as Bouncer can therefore support the selection of conspecific sperm. The polypeptide is Protein Bouncer (Oryzias latipes (Japanese rice fish)).